Consider the following 285-residue polypeptide: Bifunctional protein FolD (285 aa).

NADP(+) contacts are provided by residues 165-167 (GRS) and Ser190.

The protein belongs to the tetrahydrofolate dehydrogenase/cyclohydrolase family. In terms of assembly, homodimer.

It catalyses the reaction (6R)-5,10-methylene-5,6,7,8-tetrahydrofolate + NADP(+) = (6R)-5,10-methenyltetrahydrofolate + NADPH. The enzyme catalyses (6R)-5,10-methenyltetrahydrofolate + H2O = (6R)-10-formyltetrahydrofolate + H(+). It functions in the pathway one-carbon metabolism; tetrahydrofolate interconversion. In terms of biological role, catalyzes the oxidation of 5,10-methylenetetrahydrofolate to 5,10-methenyltetrahydrofolate and then the hydrolysis of 5,10-methenyltetrahydrofolate to 10-formyltetrahydrofolate. This Burkholderia pseudomallei (strain 1710b) protein is Bifunctional protein FolD.